The chain runs to 2006 residues: Supporter of activation of yellow protein (2006 aa).

Disordered regions lie at residues 1-208 (MNDL…RRVE), 313-347 (MPAK…SSLA), 458-564 (EEKP…AQSQ), 744-794 (DTQD…DPAR), 821-916 (DLEG…KSRR), 929-1029 (VSVG…NNNS), 1044-1082 (CSSS…SDPL), and 1099-1196 (QQLR…SAVA). Low complexity predominate over residues 10–60 (VAATSSSGSESGTAVESAAATSTAGSAGAAGRPQSNCSANSNAKSVAASST). The span at 67–81 (VSSTSSPAQRDQQLN) shows a compositional bias: polar residues. Pro residues predominate over residues 118 to 128 (SPPPTLPPPTT). The segment covering 129–168 (PCDDAPSTTGASASASSASGEAPSAASAAGAAGGPMAATA) has biased composition (low complexity). Residues 189–199 (ANPNSNANESQ) are compositionally biased toward polar residues. A compositionally biased stretch (low complexity) spans 321-347 (LSSLSPASASSSSASSSSSSSSSSSLA). Polar residues predominate over residues 485-494 (GGESNSSSQE). A compositionally biased stretch (basic and acidic residues) spans 525 to 534 (SLSKEHDPKI). Over residues 543–563 (ASNGIASGGSKASKASKSAQS) the composition is skewed to low complexity. The segment covering 744-758 (DTQDNNNENHLKRTN) has biased composition (basic and acidic residues). Polar residues-rich tracts occupy residues 759–769 (SEGNESPSSRL) and 828–844 (PPTQ…NGAL). The span at 861–870 (PATPQPPPVA) shows a compositional bias: pro residues. Composition is skewed to basic and acidic residues over residues 936–945 (ADMKAKEKES) and 963–972 (ESPKTRDHRP). 2 stretches are compositionally biased toward low complexity: residues 978-990 (RTTT…LQPT) and 1018-1029 (SSESESNNNNNS). The span at 1053–1080 (GAAANQQVIGGSGSSSMLPPTTILSSSD) shows a compositional bias: polar residues. Low complexity predominate over residues 1103 to 1112 (SSRPSSISCG). The span at 1147-1158 (GRGRGRRSRGGR) shows a compositional bias: basic residues. The span at 1161-1173 (GSSSVDRAVSVGG) shows a compositional bias: low complexity. The SAY stretch occupies residues 1340 to 1573 (MIQEQVALYL…PPTDLMAQLL (234 aa)). The segment at 1579-1685 (AVGSDEIKTS…AGSEDEDGNE (107 aa)) is disordered. Low complexity-rich tracts occupy residues 1627-1652 (TASS…SSDT) and 1660-1677 (FSST…SGAG). The PHD-type 1; degenerate zinc finger occupies 1694-1751 (TCGVCLRSQHRNARDMPEAFIRCYTCRKRVHPSCVDMPPRMVGRVRNYNWQCAGCKCC). Residues 1753–1796 (KCRSSQRPGKMLYCEQCDRGYHIYCLGLRTVPDGRWSCERCCFC) form a PHD-type 2; degenerate zinc finger. The disordered stretch occupies residues 1887-1911 (TSAQTDDSPMPSPGLTTNGGRALSP).

The protein belongs to the SAYP family. As to expression, widely expressed. Highly expressed in ovary. Expressed in nursing cells and growing oocytes at all stages of development and accumulates in mature oocytes. Expressed in the nuclei of syncytium blastoderm of early embryos and in the nuclei of different tissues of late embryos, larvae, and adults.

It localises to the nucleus. Its subcellular location is the cytoplasm. The protein resides in the chromosome. Its function is as follows. Essential transcription regulator during early development. Coactivates transcription of some euchromatin genes and repress transcription in of euchromatin genes translocated to heterochromatin. This Drosophila melanogaster (Fruit fly) protein is Supporter of activation of yellow protein (e(y)3).